The primary structure comprises 182 residues: tRNA-splicing endonuclease (182 aa).

Active-site residues include Tyr-119, His-127, and Lys-158.

Belongs to the tRNA-intron endonuclease family. Archaeal short subfamily. As to quaternary structure, homotetramer; although the tetramer contains four active sites, only two participate in the cleavage. Therefore, it should be considered as a dimer of dimers.

The catalysed reaction is pretRNA = a 3'-half-tRNA molecule with a 5'-OH end + a 5'-half-tRNA molecule with a 2',3'-cyclic phosphate end + an intron with a 2',3'-cyclic phosphate and a 5'-hydroxyl terminus.. Its function is as follows. Endonuclease that removes tRNA introns. Cleaves pre-tRNA at the 5'- and 3'-splice sites to release the intron. The products are an intron and two tRNA half-molecules bearing 2',3' cyclic phosphate and 5'-OH termini. Recognizes a pseudosymmetric substrate in which 2 bulged loops of 3 bases are separated by a stem of 4 bp. This Saccharolobus islandicus (strain Y.N.15.51 / Yellowstone #2) (Sulfolobus islandicus) protein is tRNA-splicing endonuclease.